Reading from the N-terminus, the 415-residue chain is Multidrug resistance protein MdtA (415 aa).

Residues 1–21 (MKGSYKSRWVIVIVVVIAAIA) form the signal peptide. A compositionally biased stretch (polar residues) spans 31–46 (DSQSAAPGATKQAQQS). Disordered stretches follow at residues 31–56 (DSQS…GMRA) and 392–415 (EAQS…GARS). A compositionally biased stretch (basic and acidic residues) spans 399 to 415 (PEEKATSREYAKKGARS).

Belongs to the membrane fusion protein (MFP) (TC 8.A.1) family. In terms of assembly, part of a tripartite efflux system composed of MdtA, MdtB and MdtC.

It is found in the cell inner membrane. Its function is as follows. The MdtABC tripartite complex confers resistance against novobiocin and deoxycholate. The sequence is that of Multidrug resistance protein MdtA from Escherichia coli O6:K15:H31 (strain 536 / UPEC).